The chain runs to 201 residues: dITP/XTP pyrophosphatase (201 aa).

Position 8–13 (8–13 (SNNPGK)) interacts with substrate. Mg(2+) is bound by residues glutamate 40 and aspartate 69. Aspartate 69 (proton acceptor) is an active-site residue. Residues serine 70, 155-158 (FGYD), lysine 178, and 183-184 (HR) contribute to the substrate site.

Belongs to the HAM1 NTPase family. As to quaternary structure, homodimer. The cofactor is Mg(2+).

The enzyme catalyses XTP + H2O = XMP + diphosphate + H(+). The catalysed reaction is dITP + H2O = dIMP + diphosphate + H(+). It catalyses the reaction ITP + H2O = IMP + diphosphate + H(+). Pyrophosphatase that catalyzes the hydrolysis of nucleoside triphosphates to their monophosphate derivatives, with a high preference for the non-canonical purine nucleotides XTP (xanthosine triphosphate), dITP (deoxyinosine triphosphate) and ITP. Seems to function as a house-cleaning enzyme that removes non-canonical purine nucleotides from the nucleotide pool, thus preventing their incorporation into DNA/RNA and avoiding chromosomal lesions. The sequence is that of dITP/XTP pyrophosphatase from Ralstonia nicotianae (strain ATCC BAA-1114 / GMI1000) (Ralstonia solanacearum).